The following is a 97-amino-acid chain: Large ribosomal subunit protein eL21 (97 aa).

Polar residues predominate over residues 1-12 (MPSSNGPRQATR). The segment at 1 to 35 (MPSSNGPRQATRNKLKNDARERGTSPPQRSIEEYD) is disordered.

This sequence belongs to the eukaryotic ribosomal protein eL21 family.

This Natronomonas pharaonis (strain ATCC 35678 / DSM 2160 / CIP 103997 / JCM 8858 / NBRC 14720 / NCIMB 2260 / Gabara) (Halobacterium pharaonis) protein is Large ribosomal subunit protein eL21.